Here is a 131-residue protein sequence, read N- to C-terminus: Large ribosomal subunit protein bL17 (131 aa).

Belongs to the bacterial ribosomal protein bL17 family. In terms of assembly, part of the 50S ribosomal subunit. Contacts protein L32.

The chain is Large ribosomal subunit protein bL17 from Methylacidiphilum infernorum (isolate V4) (Methylokorus infernorum (strain V4)).